Here is a 65-residue protein sequence, read N- to C-terminus: Alpha-toxin BeM10 (65 aa).

The LCN-type CS-alpha/beta domain maps to 2–65 (RDGYIADDKD…IKQKVSGKCN (64 aa)). Disulfide bonds link cysteine 12–cysteine 64, cysteine 16–cysteine 35, cysteine 22–cysteine 45, and cysteine 26–cysteine 47.

The protein belongs to the long (4 C-C) scorpion toxin superfamily. Sodium channel inhibitor family. Alpha subfamily. In terms of tissue distribution, expressed by the venom gland.

The protein localises to the secreted. Alpha toxins bind voltage-independently at site-3 of sodium channels (Nav) and inhibit the inactivation of the activated channels, thereby blocking neuronal transmission. Has paralytic activity in mice. In Mesobuthus eupeus (Lesser Asian scorpion), this protein is Alpha-toxin BeM10.